The primary structure comprises 908 residues: Protein translocase subunit SecA (908 aa).

ATP-binding positions include glutamine 87, 105 to 109, and aspartate 512; that span reads GEGKT. The disordered stretch occupies residues 866-908; sequence GSDEDDAIAAHTPMIRDGDKVGRNDPCPCGSGRKYKQCHGKLS. The span at 879–888 shows a compositional bias: basic and acidic residues; that stretch reads MIRDGDKVGR. Zn(2+)-binding residues include cysteine 892, cysteine 894, cysteine 903, and histidine 904. The span at 898–908 shows a compositional bias: basic residues; it reads RKYKQCHGKLS.

The protein belongs to the SecA family. Monomer and homodimer. Part of the essential Sec protein translocation apparatus which comprises SecA, SecYEG and auxiliary proteins SecDF-YajC and YidC. Zn(2+) serves as cofactor.

It localises to the cell inner membrane. It is found in the cytoplasm. It carries out the reaction ATP + H2O + cellular proteinSide 1 = ADP + phosphate + cellular proteinSide 2.. Part of the Sec protein translocase complex. Interacts with the SecYEG preprotein conducting channel. Has a central role in coupling the hydrolysis of ATP to the transfer of proteins into and across the cell membrane, serving both as a receptor for the preprotein-SecB complex and as an ATP-driven molecular motor driving the stepwise translocation of polypeptide chains across the membrane. The chain is Protein translocase subunit SecA from Shewanella oneidensis (strain ATCC 700550 / JCM 31522 / CIP 106686 / LMG 19005 / NCIMB 14063 / MR-1).